A 599-amino-acid chain; its full sequence is Elongation factor 4 (599 aa).

The 183-residue stretch at 2–184 (KNIRNFSIIA…RLVRDIPPPQ (183 aa)) folds into the tr-type G domain. GTP is bound by residues 14–19 (DHGKST) and 131–134 (NKID).

It belongs to the TRAFAC class translation factor GTPase superfamily. Classic translation factor GTPase family. LepA subfamily.

Its subcellular location is the cell inner membrane. It catalyses the reaction GTP + H2O = GDP + phosphate + H(+). Its function is as follows. Required for accurate and efficient protein synthesis under certain stress conditions. May act as a fidelity factor of the translation reaction, by catalyzing a one-codon backward translocation of tRNAs on improperly translocated ribosomes. Back-translocation proceeds from a post-translocation (POST) complex to a pre-translocation (PRE) complex, thus giving elongation factor G a second chance to translocate the tRNAs correctly. Binds to ribosomes in a GTP-dependent manner. The protein is Elongation factor 4 of Salmonella paratyphi A (strain ATCC 9150 / SARB42).